A 307-amino-acid chain; its full sequence is Ribonuclease Z (307 aa).

Residues His-61, His-63, Asp-65, His-66, His-138, Asp-208, and His-264 each contribute to the Zn(2+) site. Residue Asp-65 is the Proton acceptor of the active site.

This sequence belongs to the RNase Z family. In terms of assembly, homodimer. Zn(2+) is required as a cofactor.

The enzyme catalyses Endonucleolytic cleavage of RNA, removing extra 3' nucleotides from tRNA precursor, generating 3' termini of tRNAs. A 3'-hydroxy group is left at the tRNA terminus and a 5'-phosphoryl group is left at the trailer molecule.. Functionally, zinc phosphodiesterase, which displays some tRNA 3'-processing endonuclease activity. Probably involved in tRNA maturation, by removing a 3'-trailer from precursor tRNA. The sequence is that of Ribonuclease Z from Pyrococcus abyssi (strain GE5 / Orsay).